A 38-amino-acid polypeptide reads, in one-letter code: Potassium channel toxin alpha-KTx 3.8 (38 aa).

3 disulfide bridges follow: Cys8/Cys28, Cys14/Cys33, and Cys18/Cys35. An interaction with Ca(2+)-activated K(+) channels region spans residues 26-33 (GKCMNGKC).

As to expression, expressed by the venom gland.

Its subcellular location is the secreted. Potassium channel inhibitor. This chain is Potassium channel toxin alpha-KTx 3.8, found in Hottentotta tamulus sindicus (Scorpion).